The primary structure comprises 98 residues: Large ribosomal subunit protein uL23 (98 aa).

The protein belongs to the universal ribosomal protein uL23 family. As to quaternary structure, part of the 50S ribosomal subunit. Contacts protein L29, and trigger factor when it is bound to the ribosome.

In terms of biological role, one of the early assembly proteins it binds 23S rRNA. One of the proteins that surrounds the polypeptide exit tunnel on the outside of the ribosome. Forms the main docking site for trigger factor binding to the ribosome. In Halorhodospira halophila (strain DSM 244 / SL1) (Ectothiorhodospira halophila (strain DSM 244 / SL1)), this protein is Large ribosomal subunit protein uL23.